A 183-amino-acid polypeptide reads, in one-letter code: MSIGRVVVLTGPSGVGKGTLLKAILSQHPEAFLSISATTRSPRPGEVDGQHYYFLSREEFQTKIAEQEFLEWAEFAGNLYGTPRSPVIEQVNLGRTVILEIELEGARQVRKTLPSARQVVLLPPSVEELEQRIRERATEDEAAIARRLLQAQTEIGAAKEFDRCVINDQLDTAITALEAAIFS.

In terms of domain architecture, Guanylate kinase-like spans 4–182; it reads GRVVVLTGPS…AITALEAAIF (179 aa). Residue 11–18 participates in ATP binding; that stretch reads GPSGVGKG.

The protein belongs to the guanylate kinase family.

Its subcellular location is the cytoplasm. The enzyme catalyses GMP + ATP = GDP + ADP. The catalysed reaction is dZMP + ATP = dZDP + ADP. It functions in the pathway purine metabolism. Functionally, essential for recycling GMP and indirectly, cGMP. In terms of biological role, (Microbial infection) Catalyzes the phosphorylation of dZMP to dZDP, when the bacterium is infected by a phage that produces the substrate for the synthesis of dZTP (2- amino-2'-deoxyadenosine 5'-triphosphate), which is then used by the phage as a DNA polymerase substrate. The sequence is that of Guanylate kinase from Synechococcus sp. (strain ATCC 27144 / PCC 6301 / SAUG 1402/1) (Anacystis nidulans).